Here is a 189-residue protein sequence, read N- to C-terminus: dCTP deaminase, dUMP-forming (189 aa).

DCTP-binding positions include 101 to 106 (KSSLGR), D119, 127 to 129 (TLE), Q148, Y162, and Q174. E129 (proton donor/acceptor) is an active-site residue. Residues 163 to 189 (GSSEAGSKYQGQRGPTPSKAYLNFNRS) form a disordered region.

Belongs to the dCTP deaminase family. In terms of assembly, homotrimer.

The enzyme catalyses dCTP + 2 H2O = dUMP + NH4(+) + diphosphate. It participates in pyrimidine metabolism; dUMP biosynthesis; dUMP from dCTP: step 1/1. Its function is as follows. Bifunctional enzyme that catalyzes both the deamination of dCTP to dUTP and the hydrolysis of dUTP to dUMP without releasing the toxic dUTP intermediate. In Rhodococcus erythropolis (strain PR4 / NBRC 100887), this protein is dCTP deaminase, dUMP-forming.